A 216-amino-acid chain; its full sequence is Somatotropin (216 aa).

The signal sequence occupies residues 1-26 (MAAGPRTSALLAFALLCLPWTREVGA). Position 45 (His-45) interacts with Zn(2+). A disulfide bond links Cys-78 and Cys-189. At Ser-131 the chain carries Phosphoserine. Glu-198 serves as a coordination point for Zn(2+). The cysteines at positions 206 and 214 are disulfide-linked.

The protein belongs to the somatotropin/prolactin family.

Its subcellular location is the secreted. Its function is as follows. Plays an important role in growth control. Its major role in stimulating body growth is to stimulate the liver and other tissues to secrete IGF1. It stimulates both the differentiation and proliferation of myoblasts. It also stimulates amino acid uptake and protein synthesis in muscle and other tissues. This chain is Somatotropin (GH1), found in Sus scrofa (Pig).